Reading from the N-terminus, the 332-residue chain is DnAJ-like protein slr0093 (332 aa).

The J domain occupies 6-75 (FKDYYQILGV…RQKYDQFGRY (70 aa)).

The polypeptide is DnAJ-like protein slr0093 (Synechocystis sp. (strain ATCC 27184 / PCC 6803 / Kazusa)).